The chain runs to 479 residues: 5-hydroxytryptamine receptor 2B (479 aa).

Residues Met1 to Trp55 lie on the Extracellular side of the membrane. The helical transmembrane segment at Ala56–Val78 threads the bilayer. Over Ser79–Asn89 the chain is Cytoplasmic. A helical transmembrane segment spans residues Tyr90–Leu112. Topologically, residues Thr113–Pro128 are extracellular. Cys127 and Cys206 form a disulfide bridge. A helical transmembrane segment spans residues Ala129 to Leu150. Positions 134 and 139 each coordinate ergotamine. The DRY motif; important for ligand-induced conformation changes signature appears at Asp151–Tyr153. The Cytoplasmic portion of the chain corresponds to Asp151 to Thr170. Residues Ala171–Ile191 traverse the membrane as a helical segment. Topologically, residues Lys192–Ser215 are extracellular. Residue Asn203 is glycosylated (N-linked (GlcNAc...) asparagine). Residue Leu208 coordinates ergotamine. A [DE]RFG motif; may stabilize a conformation that preferentially activates signaling via beta-arrestin family members motif is present at residues Asp211 to Gly214. The chain crosses the membrane as a helical span at residues Phe216–Leu238. At Thr239–Lys323 the chain is on the cytoplasmic side. The helical transmembrane segment at Val324–Val344 threads the bilayer. Topologically, residues Thr345–Thr359 are extracellular. A disulfide bridge connects residues Cys349 and Cys352. Residue Asn353 is glycosylated (N-linked (GlcNAc...) asparagine). A helical transmembrane segment spans residues Leu360 to Leu381. Residues Asn375–Tyr379 carry the NPxxY motif; important for ligand-induced conformation changes and signaling motif. Over Phe382–Ile479 the chain is Cytoplasmic. Cys396 carries the S-palmitoyl cysteine lipid modification. Positions Ser477–Ile479 match the PDZ-binding motif.

This sequence belongs to the G-protein coupled receptor 1 family. Interacts (via C-terminus) with MPDZ. As to expression, stomach fundus.

The protein localises to the cell membrane. It is found in the synapse. Its subcellular location is the synaptosome. Functionally, G-protein coupled receptor for 5-hydroxytryptamine (serotonin). Also functions as a receptor for various ergot alkaloid derivatives and psychoactive substances. Ligand binding causes a conformation change that triggers signaling via guanine nucleotide-binding proteins (G proteins) and modulates the activity of downstream effectors. HTR2B is coupled to G(q)/G(11) G alpha proteins and activates phospholipase C-beta, releasing diacylglycerol (DAG) and inositol 1,4,5-trisphosphate (IP3) second messengers that modulate the activity of phosphatidylinositol 3-kinase and promote the release of Ca(2+) ions from intracellular stores, respectively. Beta-arrestin family members inhibit signaling via G proteins and mediate activation of alternative signaling pathways. Plays a role in the regulation of dopamine and 5-hydroxytryptamine release, 5-hydroxytryptamine uptake and in the regulation of extracellular dopamine and 5-hydroxytryptamine levels, and thereby affects neural activity. May play a role in the perception of pain. Plays a role in the regulation of behavior, including impulsive behavior. Required for normal proliferation of embryonic cardiac myocytes and normal heart development. Protects cardiomyocytes against apoptosis. Plays a role in the adaptation of pulmonary arteries to chronic hypoxia. Plays a role in vasoconstriction. Required for normal osteoblast function and proliferation, and for maintaining normal bone density. Required for normal proliferation of the interstitial cells of Cajal in the intestine. The sequence is that of 5-hydroxytryptamine receptor 2B (Htr2b) from Rattus norvegicus (Rat).